We begin with the raw amino-acid sequence, 309 residues long: Agglutinin (309 aa).

M1 is modified (N-acetylmethionine). Jacalin-type lectin domains follow at residues F4–I148 and P163–Y308.

The protein belongs to the jacalin lectin family.

In terms of biological role, D-mannose/D-glucose-binding lectin. Binds N-linked high-mannose-type glycans. Has a preference for smaller (Man(2)-Man(6)) high-mannose-type glycans to larger (Man(7)-Man(9)) ones. Recognizes both alpha1-6 extended and alpha1-3 extended monoantennary glycans. The addition of alpha1-2Man to the Man-alpha1-3Man-beta branch results in a significant loss of affinity, but beta1-2GlcNAc has some affinity. Has less affinity for biantennary glycans, and affinity is very weak for the biantennary complex-type N-glycans with bisecting GlcNAc. No affinity is observed for tri- and tetra-antennary glycans. Has mitogenic and hemagglutinating activities. The protein is Agglutinin of Castanea crenata (Japanese chestnut).